The chain runs to 161 residues: uncharacterized protein (161 aa).

Positions 1 to 29 (MTLYDTVKELQEKLRNGEIEINTFLERLG) form a coiled coil.

This is an uncharacterized protein from Acidianus convivator (ATV).